The sequence spans 249 residues: Proteasome subunit alpha type-7 (249 aa).

Belongs to the peptidase T1A family. As to quaternary structure, the 26S proteasome consists of a 20S proteasome core and two 19S regulatory subunits. The 20S proteasome core is composed of 28 subunits that are arranged in four stacked rings, resulting in a barrel-shaped structure. The two end rings are each formed by seven alpha subunits, and the two central rings are each formed by seven beta subunits. The catalytic chamber with the active sites is on the inside of the barrel.

Its subcellular location is the cytoplasm. The protein localises to the nucleus. Functionally, the proteasome is a multicatalytic proteinase complex which is characterized by its ability to cleave peptides with Arg, Phe, Tyr, Leu, and Glu adjacent to the leaving group at neutral or slightly basic pH. The proteasome has an ATP-dependent proteolytic activity. In Cicer arietinum (Chickpea), this protein is Proteasome subunit alpha type-7 (PAD1).